A 1732-amino-acid polypeptide reads, in one-letter code: Lys-gingipain W83 (1732 aa).

An N-terminal signal peptide occupies residues 1 to 24 (MRKLLLLIAASLLGVGLYAQSAKI). A propeptide spanning residues 25–228 (KLDAPTTRTT…ETAYKQLFNR (204 aa)) is cleaved from the precursor. Residues Asp-313, Asp-337, Asp-339, Phe-341, and Glu-343 each coordinate Ca(2+). His-444 acts as the Proton donor in catalysis. Catalysis depends on Cys-477, which acts as the Nucleophile. Positions 482 and 491 each coordinate Ca(2+). Residues 965-988 (DAPNGTPNPNPNPNPNPGTTLSES) are disordered. Residues 970 to 980 (TPNPNPNPNPN) are compositionally biased toward pro residues. Ca(2+) contacts are provided by Ser-988, Glu-990, Asp-1001, Asp-1003, Asp-1005, His-1007, Ser-1022, Gly-1024, Asn-1043, Asp-1146, Glu-1147, Asp-1433, Glu-1435, Asp-1446, Asp-1448, Asp-1450, Asn-1452, Ser-1470, Ile-1472, Asn-1490, and Asp-1595.

It belongs to the peptidase C25 family. Post-translationally, proteolytically cleaved into a catalytic subunit and three adhesins. Arg-gingipain is involved in this post-translational processing.

It is found in the secreted. It catalyses the reaction Endopeptidase with strict specificity for lysyl bonds.. Cysteine proteinase with a strong preference for substrates with Lys in the P1 position. Hydrolyzes bovine hemoglobin, bovine serum albumin, casein, human placental type I collagen and human IgA and IgG. Disrupts the functions of polymorphonuclear leukocytes. May act as a virulence factor in the development of peridontal disease. Involved in the coaggregation of P.gingivalis with other oral bacteria. Has hemolytic activity; this is mediated by the adhesin domains and does not require the catalytic domain. In Porphyromonas gingivalis (Bacteroides gingivalis), this protein is Lys-gingipain W83.